A 421-amino-acid polypeptide reads, in one-letter code: Indole-3-pyruvate monooxygenase YUCCA8 (421 aa).

30-35 (GAGPSG) is a binding site for FAD. 201 to 206 (GCGNSG) contacts NADP(+).

This sequence belongs to the FMO family. It depends on FAD as a cofactor. Expressed in organs undergoing active growth and cell division.

Its subcellular location is the endoplasmic reticulum. The enzyme catalyses indole-3-pyruvate + NADPH + O2 + H(+) = (indol-3-yl)acetate + CO2 + NADP(+) + H2O. In terms of biological role, involved in auxin biosynthesis. Converts the indole-3-pyruvic acid (IPA) produced by the TAA family to indole-3-acetic acid (IAA). Seems not able to use tryptamine (TAM) as substrate. Probably responsible for auxin biosynthesis in leaves and involved in the regulation of lateral leaf growth. Required for maintaining water homeostasis and an appropriate root to shoot ratio. Required for the inhibition of root growth by ethylene in etiolated seedlings. Functions downstream of the ethylene-response transcription factor EIL1. The polypeptide is Indole-3-pyruvate monooxygenase YUCCA8 (Oryza sativa subsp. indica (Rice)).